We begin with the raw amino-acid sequence, 254 residues long: Adenosylcobinamide-GDP ribazoletransferase (254 aa).

A run of 6 helical transmembrane segments spans residues 28 to 48, 62 to 81, 109 to 129, 138 to 158, 179 to 199, and 200 to 220; these read FRQT…IVAL, IGVY…IDGI, VGVG…LGVL, VTFI…ALLV, LSLF…PYLG, and ASPT…IKQW.

This sequence belongs to the CobS family. The cofactor is Mg(2+).

It is found in the cell membrane. The catalysed reaction is alpha-ribazole + adenosylcob(III)inamide-GDP = adenosylcob(III)alamin + GMP + H(+). It carries out the reaction alpha-ribazole 5'-phosphate + adenosylcob(III)inamide-GDP = adenosylcob(III)alamin 5'-phosphate + GMP + H(+). It participates in cofactor biosynthesis; adenosylcobalamin biosynthesis; adenosylcobalamin from cob(II)yrinate a,c-diamide: step 7/7. Joins adenosylcobinamide-GDP and alpha-ribazole to generate adenosylcobalamin (Ado-cobalamin). Also synthesizes adenosylcobalamin 5'-phosphate from adenosylcobinamide-GDP and alpha-ribazole 5'-phosphate. This chain is Adenosylcobinamide-GDP ribazoletransferase, found in Haloquadratum walsbyi (strain DSM 16790 / HBSQ001).